Here is a 137-residue protein sequence, read N- to C-terminus: Large ribosomal subunit protein uL16 (137 aa).

This sequence belongs to the universal ribosomal protein uL16 family. In terms of assembly, part of the 50S ribosomal subunit.

Functionally, binds 23S rRNA and is also seen to make contacts with the A and possibly P site tRNAs. This chain is Large ribosomal subunit protein uL16, found in Psychrobacter arcticus (strain DSM 17307 / VKM B-2377 / 273-4).